Reading from the N-terminus, the 87-residue chain is U3-theraphotoxin-Hhn1d (87 aa).

A signal peptide spans 1–24; it reads MVNMKASMFLTFAGLVLLFVVCYA. Positions 25-52 are excised as a propeptide; that stretch reads SESEEKEFPKEMLSSIFAVDNDFKQEER. 3 disulfide bridges follow: C54–C67, C61–C72, and C66–C79.

It belongs to the neurotoxin 10 (Hwtx-1) family. 51 (Hntx-8) subfamily. Hntx-8 sub-subfamily. Expressed by the venom gland.

It is found in the secreted. Ion channel inhibitor. This is U3-theraphotoxin-Hhn1d from Cyriopagopus hainanus (Chinese bird spider).